The following is a 265-amino-acid chain: Nitrogenase iron protein 2 (265 aa).

Position 8 to 15 (8 to 15 (GKGGIGKS)) interacts with ATP. Cys91 is a binding site for [4Fe-4S] cluster. ADP-ribosylarginine; by dinitrogenase reductase ADP-ribosyltransferase is present on Arg94. Position 126 (Cys126) interacts with [4Fe-4S] cluster.

It belongs to the NifH/BchL/ChlL family. As to quaternary structure, homodimer. [4Fe-4S] cluster is required as a cofactor. In terms of processing, the reversible ADP-ribosylation of Arg-94 inactivates the nitrogenase reductase and regulates nitrogenase activity.

It carries out the reaction N2 + 8 reduced [2Fe-2S]-[ferredoxin] + 16 ATP + 16 H2O = H2 + 8 oxidized [2Fe-2S]-[ferredoxin] + 2 NH4(+) + 16 ADP + 16 phosphate + 6 H(+). Its function is as follows. The key enzymatic reactions in nitrogen fixation are catalyzed by the nitrogenase complex, which has 2 components: the iron protein and the molybdenum-iron protein. In Methanothermobacter thermautotrophicus (strain ATCC 29096 / DSM 1053 / JCM 10044 / NBRC 100330 / Delta H) (Methanobacterium thermoautotrophicum), this protein is Nitrogenase iron protein 2 (nifH2).